The following is a 150-amino-acid chain: Triosephosphate isomerase (150 aa).

N9 and K11 together coordinate substrate. H95 (electrophile) is an active-site residue.

The protein belongs to the triosephosphate isomerase family. Homodimer.

It is found in the cytoplasm. The catalysed reaction is D-glyceraldehyde 3-phosphate = dihydroxyacetone phosphate. Its pathway is carbohydrate biosynthesis; gluconeogenesis. The protein operates within carbohydrate degradation; glycolysis; D-glyceraldehyde 3-phosphate from glycerone phosphate: step 1/1. The protein is Triosephosphate isomerase (tpiA) of Mycoplasmoides pirum (Mycoplasma pirum).